The sequence spans 473 residues: Siroheme synthase (473 aa).

Positions M1–L206 are precorrin-2 dehydrogenase /sirohydrochlorin ferrochelatase. Residues T22 to V23 and P43 to K44 each bind NAD(+). The tract at residues G223–A473 is uroporphyrinogen-III C-methyltransferase. Residue P232 participates in S-adenosyl-L-methionine binding. The active-site Proton acceptor is D255. The active-site Proton donor is K277. S-adenosyl-L-methionine-binding positions include G308–D310, I313, T338–A339, M390, and G419.

In the N-terminal section; belongs to the precorrin-2 dehydrogenase / sirohydrochlorin ferrochelatase family. It in the C-terminal section; belongs to the precorrin methyltransferase family.

The enzyme catalyses uroporphyrinogen III + 2 S-adenosyl-L-methionine = precorrin-2 + 2 S-adenosyl-L-homocysteine + H(+). The catalysed reaction is precorrin-2 + NAD(+) = sirohydrochlorin + NADH + 2 H(+). It catalyses the reaction siroheme + 2 H(+) = sirohydrochlorin + Fe(2+). The protein operates within cofactor biosynthesis; adenosylcobalamin biosynthesis; precorrin-2 from uroporphyrinogen III: step 1/1. It participates in cofactor biosynthesis; adenosylcobalamin biosynthesis; sirohydrochlorin from precorrin-2: step 1/1. Its pathway is porphyrin-containing compound metabolism; siroheme biosynthesis; precorrin-2 from uroporphyrinogen III: step 1/1. It functions in the pathway porphyrin-containing compound metabolism; siroheme biosynthesis; siroheme from sirohydrochlorin: step 1/1. The protein operates within porphyrin-containing compound metabolism; siroheme biosynthesis; sirohydrochlorin from precorrin-2: step 1/1. Multifunctional enzyme that catalyzes the SAM-dependent methylations of uroporphyrinogen III at position C-2 and C-7 to form precorrin-2 via precorrin-1. Then it catalyzes the NAD-dependent ring dehydrogenation of precorrin-2 to yield sirohydrochlorin. Finally, it catalyzes the ferrochelation of sirohydrochlorin to yield siroheme. This Hydrogenovibrio crunogenus (strain DSM 25203 / XCL-2) (Thiomicrospira crunogena) protein is Siroheme synthase.